The sequence spans 448 residues: Trk system potassium uptake protein TrkA homolog 2 (448 aa).

Positions 1–124 (MKAVVIGAGE…RAQVGVDIMI (124 aa)) constitute an RCK N-terminal 1 domain. Residues 7 to 11 (GAGEV), Glu29, 70 to 71 (TG), and Arg101 contribute to the NAD(+) site. The RCK C-terminal 1 domain maps to 144 to 225 (IDAEMFAGGK…MADLENVFGN (82 aa)). Residues 230-348 (RNRILLIGCG…FEMVGIDIAV (119 aa)) form the RCK N-terminal 2 domain. 232 to 262 (RILLIGCGIVGFYLAKIIDKDENADLKVIEY) contacts NAD(+). One can recognise an RCK C-terminal 2 domain in the interval 368–448 (EALATIEGEK…AVRSVEKLFK (81 aa)).

In terms of biological role, part of a potassium transport system. The protein is Trk system potassium uptake protein TrkA homolog 2 (trkA2) of Methanosarcina mazei (strain ATCC BAA-159 / DSM 3647 / Goe1 / Go1 / JCM 11833 / OCM 88) (Methanosarcina frisia).